A 332-amino-acid polypeptide reads, in one-letter code: Glycerol-3-phosphate dehydrogenase [NAD(P)+] (332 aa).

Positions 13, 33, and 105 each coordinate NADPH. The sn-glycerol 3-phosphate site is built by lysine 105, glycine 134, and serine 136. Position 138 (alanine 138) interacts with NADPH. Residues lysine 189, aspartate 242, serine 252, arginine 253, and asparagine 254 each coordinate sn-glycerol 3-phosphate. Lysine 189 (proton acceptor) is an active-site residue. Arginine 253 is a binding site for NADPH. Glutamate 279 is a binding site for NADPH.

This sequence belongs to the NAD-dependent glycerol-3-phosphate dehydrogenase family.

Its subcellular location is the cytoplasm. It carries out the reaction sn-glycerol 3-phosphate + NAD(+) = dihydroxyacetone phosphate + NADH + H(+). The catalysed reaction is sn-glycerol 3-phosphate + NADP(+) = dihydroxyacetone phosphate + NADPH + H(+). Its pathway is membrane lipid metabolism; glycerophospholipid metabolism. In terms of biological role, catalyzes the reduction of the glycolytic intermediate dihydroxyacetone phosphate (DHAP) to sn-glycerol 3-phosphate (G3P), the key precursor for phospholipid synthesis. The polypeptide is Glycerol-3-phosphate dehydrogenase [NAD(P)+] (Halorhodospira halophila (strain DSM 244 / SL1) (Ectothiorhodospira halophila (strain DSM 244 / SL1))).